Here is a 527-residue protein sequence, read N- to C-terminus: Benzoate--CoA ligase (527 aa).

The protein belongs to the ATP-dependent AMP-binding enzyme family. Benzoate-CoA ligase subfamily. Monomer.

It catalyses the reaction benzoate + ATP + CoA = benzoyl-CoA + AMP + diphosphate. In terms of biological role, catalyzes the ligation of benzoate and CoA to form benzoyl-CoA at the expense of ATP. The enzyme also ligates 2-aminobenzoate and CoA. The enzyme shows activity toward a number of benzoate derivatives. The polypeptide is Benzoate--CoA ligase (bclA) (Thauera aromatica).